The sequence spans 511 residues: 2-isopropylmalate synthase (511 aa).

In terms of domain architecture, Pyruvate carboxyltransferase spans 4 to 266; sequence IRIFDTTLRD…ETGIDLSQLY (263 aa). The Mn(2+) site is built by D13, H201, H203, and N237. Residues 391–511 form a regulatory domain region; that stretch reads VLEKIRVVSG…IAANARAQKN (121 aa).

Belongs to the alpha-IPM synthase/homocitrate synthase family. LeuA type 1 subfamily. Homodimer. The cofactor is Mn(2+).

Its subcellular location is the cytoplasm. It catalyses the reaction 3-methyl-2-oxobutanoate + acetyl-CoA + H2O = (2S)-2-isopropylmalate + CoA + H(+). Its pathway is amino-acid biosynthesis; L-leucine biosynthesis; L-leucine from 3-methyl-2-oxobutanoate: step 1/4. Its function is as follows. Catalyzes the condensation of the acetyl group of acetyl-CoA with 3-methyl-2-oxobutanoate (2-ketoisovalerate) to form 3-carboxy-3-hydroxy-4-methylpentanoate (2-isopropylmalate). This Acetivibrio thermocellus (strain ATCC 27405 / DSM 1237 / JCM 9322 / NBRC 103400 / NCIMB 10682 / NRRL B-4536 / VPI 7372) (Clostridium thermocellum) protein is 2-isopropylmalate synthase.